Reading from the N-terminus, the 223-residue chain is Ribose-5-phosphate isomerase A (223 aa).

Residues 32–35 (TGST), 85–88 (DGAD), and 98–101 (KGGG) each bind substrate. Glu-107 (proton acceptor) is an active-site residue. Lys-125 is a binding site for substrate.

It belongs to the ribose 5-phosphate isomerase family. In terms of assembly, homodimer.

The catalysed reaction is aldehydo-D-ribose 5-phosphate = D-ribulose 5-phosphate. It functions in the pathway carbohydrate degradation; pentose phosphate pathway; D-ribose 5-phosphate from D-ribulose 5-phosphate (non-oxidative stage): step 1/1. In terms of biological role, catalyzes the reversible conversion of ribose-5-phosphate to ribulose 5-phosphate. This chain is Ribose-5-phosphate isomerase A, found in Pseudomonas fluorescens (strain ATCC BAA-477 / NRRL B-23932 / Pf-5).